Reading from the N-terminus, the 529-residue chain is Bifunctional purine biosynthesis protein PurH (529 aa).

An MGS-like domain is found at 2–149 (TDLHPVRRAL…KNHAFVNVVV (148 aa)).

It belongs to the PurH family.

It catalyses the reaction (6R)-10-formyltetrahydrofolate + 5-amino-1-(5-phospho-beta-D-ribosyl)imidazole-4-carboxamide = 5-formamido-1-(5-phospho-D-ribosyl)imidazole-4-carboxamide + (6S)-5,6,7,8-tetrahydrofolate. The enzyme catalyses IMP + H2O = 5-formamido-1-(5-phospho-D-ribosyl)imidazole-4-carboxamide. It participates in purine metabolism; IMP biosynthesis via de novo pathway; 5-formamido-1-(5-phospho-D-ribosyl)imidazole-4-carboxamide from 5-amino-1-(5-phospho-D-ribosyl)imidazole-4-carboxamide (10-formyl THF route): step 1/1. Its pathway is purine metabolism; IMP biosynthesis via de novo pathway; IMP from 5-formamido-1-(5-phospho-D-ribosyl)imidazole-4-carboxamide: step 1/1. The chain is Bifunctional purine biosynthesis protein PurH from Ruegeria sp. (strain TM1040) (Silicibacter sp.).